Consider the following 306-residue polypeptide: Ubiquitin carboxyl-terminal hydrolase RPN11 (306 aa).

Met-1 carries the post-translational modification N-acetylmethionine. Residues 1–20 are disordered; the sequence is MERLQRLMMNSKVGSADTGR. The 136-residue stretch at 27-162 folds into the MPN domain; sequence VYISSIALLK…IDAFRLIDTG (136 aa). Zn(2+)-binding residues include His-109, His-111, and Asp-122. The JAMM motif signature appears at 109 to 122; sequence HSHPGFGCWLSSVD.

The protein belongs to the peptidase M67A family. Component of the lid subcomplex of the 19S proteasome regulatory particle complex (also named PA700 complex). The 26S proteasome consists of a 20S proteasome core and two 19S regulatory subunits. Interacts directly with RPN8 and STS1. N-acetylated by NAT3.

The catalysed reaction is Thiol-dependent hydrolysis of ester, thioester, amide, peptide and isopeptide bonds formed by the C-terminal Gly of ubiquitin (a 76-residue protein attached to proteins as an intracellular targeting signal).. Functionally, component of the lid subcomplex of the 26S proteasome, a multiprotein complex involved in the ATP-dependent degradation of ubiquitinated proteins. RPN11 is the only catalytically active member of the lid and serves as the essential deubiquitinase of the proteasome. The sequence is that of Ubiquitin carboxyl-terminal hydrolase RPN11 (RPN11) from Saccharomyces cerevisiae (strain ATCC 204508 / S288c) (Baker's yeast).